The following is a 284-amino-acid chain: D-tagatose-1,6-bisphosphate aldolase subunit GatY (284 aa).

The Proton donor role is filled by Asp-82. The Zn(2+) site is built by His-83 and His-180. Gly-181 lines the dihydroxyacetone phosphate pocket. His-208 contributes to the Zn(2+) binding site. Residues 209 to 211 (GAS) and 230 to 233 (NVAT) contribute to the dihydroxyacetone phosphate site.

Belongs to the class II fructose-bisphosphate aldolase family. TagBP aldolase GatY subfamily. Forms a complex with GatZ. The cofactor is Zn(2+).

It catalyses the reaction D-tagatofuranose 1,6-bisphosphate = D-glyceraldehyde 3-phosphate + dihydroxyacetone phosphate. The protein operates within carbohydrate metabolism; D-tagatose 6-phosphate degradation; D-glyceraldehyde 3-phosphate and glycerone phosphate from D-tagatose 6-phosphate: step 2/2. In terms of biological role, catalytic subunit of the tagatose-1,6-bisphosphate aldolase GatYZ, which catalyzes the reversible aldol condensation of dihydroxyacetone phosphate (DHAP or glycerone-phosphate) with glyceraldehyde 3-phosphate (G3P) to produce tagatose 1,6-bisphosphate (TBP). Requires GatZ subunit for full activity and stability. Is involved in the catabolism of galactitol. The sequence is that of D-tagatose-1,6-bisphosphate aldolase subunit GatY from Escherichia coli O139:H28 (strain E24377A / ETEC).